The primary structure comprises 389 residues: Chalcone synthase 6 (389 aa).

The active site involves Cys-164.

It belongs to the thiolase-like superfamily. Chalcone/stilbene synthases family.

The enzyme catalyses (E)-4-coumaroyl-CoA + 3 malonyl-CoA + 3 H(+) = 2',4,4',6'-tetrahydroxychalcone + 3 CO2 + 4 CoA. It functions in the pathway secondary metabolite biosynthesis; flavonoid biosynthesis. In terms of biological role, the primary product of this enzyme is 4,2',4',6'-tetrahydroxychalcone (also termed naringenin-chalcone or chalcone) which can under specific conditions spontaneously isomerize into naringenin. This is Chalcone synthase 6 (CHS6) from Pisum sativum (Garden pea).